The following is a 700-amino-acid chain: Small ribosomal subunit protein uS3c (700 aa).

Insert regions lie at residues 88 to 196 and 282 to 587; these read NCHM…LGKF and KPCT…FQTR.

The protein belongs to the universal ribosomal protein uS3 family. Part of the 30S ribosomal subunit.

It localises to the plastid. The protein localises to the chloroplast. The chain is Small ribosomal subunit protein uS3c (rps3) from Tetradesmus obliquus (Green alga).